A 310-amino-acid polypeptide reads, in one-letter code: Small ribosomal subunit biogenesis GTPase RsgA (310 aa).

In terms of domain architecture, CP-type G spans 77–238 (LSKQSHILAA…IIDTPGIKGF (162 aa)). Residues 126 to 129 (NKTD) and 180 to 188 (GNSGVGKST) contribute to the GTP site. Zn(2+) contacts are provided by Cys-262, Cys-267, His-269, and Cys-275.

The protein belongs to the TRAFAC class YlqF/YawG GTPase family. RsgA subfamily. Monomer. Associates with 30S ribosomal subunit, binds 16S rRNA. Zn(2+) is required as a cofactor.

It localises to the cytoplasm. In terms of biological role, one of several proteins that assist in the late maturation steps of the functional core of the 30S ribosomal subunit. Helps release RbfA from mature subunits. May play a role in the assembly of ribosomal proteins into the subunit. Circularly permuted GTPase that catalyzes slow GTP hydrolysis, GTPase activity is stimulated by the 30S ribosomal subunit. In Phocaeicola vulgatus (strain ATCC 8482 / DSM 1447 / JCM 5826 / CCUG 4940 / NBRC 14291 / NCTC 11154) (Bacteroides vulgatus), this protein is Small ribosomal subunit biogenesis GTPase RsgA.